A 98-amino-acid polypeptide reads, in one-letter code: Integration host factor subunit alpha (98 aa).

The interval 50–71 (GNFDLRDKNQRPGRNPKTGEDI) is disordered.

This sequence belongs to the bacterial histone-like protein family. As to quaternary structure, heterodimer of an alpha and a beta chain.

This protein is one of the two subunits of integration host factor, a specific DNA-binding protein that functions in genetic recombination as well as in transcriptional and translational control. In Proteus mirabilis (strain HI4320), this protein is Integration host factor subunit alpha.